The chain runs to 107 residues: Phosphoribosyl-ATP pyrophosphatase (107 aa).

Belongs to the PRA-PH family.

The protein resides in the cytoplasm. The catalysed reaction is 1-(5-phospho-beta-D-ribosyl)-ATP + H2O = 1-(5-phospho-beta-D-ribosyl)-5'-AMP + diphosphate + H(+). It participates in amino-acid biosynthesis; L-histidine biosynthesis; L-histidine from 5-phospho-alpha-D-ribose 1-diphosphate: step 2/9. In Mesorhizobium japonicum (strain LMG 29417 / CECT 9101 / MAFF 303099) (Mesorhizobium loti (strain MAFF 303099)), this protein is Phosphoribosyl-ATP pyrophosphatase (hisE).